The primary structure comprises 264 residues: Indole-3-glycerol phosphate synthase (264 aa).

The protein belongs to the TrpC family.

The enzyme catalyses 1-(2-carboxyphenylamino)-1-deoxy-D-ribulose 5-phosphate + H(+) = (1S,2R)-1-C-(indol-3-yl)glycerol 3-phosphate + CO2 + H2O. It functions in the pathway amino-acid biosynthesis; L-tryptophan biosynthesis; L-tryptophan from chorismate: step 4/5. This chain is Indole-3-glycerol phosphate synthase, found in Stenotrophomonas maltophilia (strain R551-3).